The following is a 292-amino-acid chain: RNA 5'-monophosphate methyltransferase (292 aa).

The disordered stretch occupies residues 1 to 20; it reads MAVPTELHGGSVKETAAEKE. S-adenosyl-L-methionine is bound by residues R46, N76, D110, 135-136, and M164; that span reads DF. The Bin3-type SAM domain occupies 53 to 274; that stretch reads ELLRQLFPES…KQTIETHPIP (222 aa).

It belongs to the methyltransferase superfamily. As to quaternary structure, interacts with DICER1; the interaction may be mediated by RNA.

The protein localises to the cytoplasm. It catalyses the reaction a 5'-end 5'-phospho-ribonucleoside-RNA + S-adenosyl-L-methionine = a 5'-end (5'-methylphospho)-ribonucleoside-RNA + S-adenosyl-L-homocysteine. The catalysed reaction is a 5'-end 5'-phospho-ribonucleoside-RNA + 2 S-adenosyl-L-methionine = a 5'-end (5'-bismethylphospho)-ribonucleoside-RNA + 2 S-adenosyl-L-homocysteine. Functionally, O-methyltransferase that specifically monomethylates 5'-monophosphate of cytoplasmic histidyl tRNA (tRNA(His)), acting as a capping enzyme by protecting tRNA(His) from cleavage by DICER1. Also able, with less efficiently, to methylate the 5' monophosphate of a subset of pre-miRNAs, acting as a negative regulator of miRNA processing. The 5' monophosphate of pre-miRNAs is recognized by DICER1 and is required for pre-miRNAs processing: methylation at this position reduces the processing of pre-miRNAs by DICER1. Was also reported to mediate dimethylation of pre-miR-145; however dimethylation cannot be reproduced by another group which observes a monomethylation of pre-miR-145. This is RNA 5'-monophosphate methyltransferase (BCDIN3D) from Pongo abelii (Sumatran orangutan).